We begin with the raw amino-acid sequence, 419 residues long: S-adenosylmethionine synthase (419 aa).

Residue His15 participates in ATP binding. Residue Asp17 participates in Mg(2+) binding. Glu43 is a K(+) binding site. Residues Glu56 and Gln99 each contribute to the L-methionine site. Positions 99 to 109 (QSPEIAQGVSC) are flexible loop. ATP-binding positions include 173-175 (DGK), 253-254 (RF), Asp262, 268-269 (RK), Ala285, and Lys289. Asp262 contributes to the L-methionine binding site. Residue Lys293 participates in L-methionine binding.

It belongs to the AdoMet synthase family. In terms of assembly, homotetramer; dimer of dimers. Requires Mg(2+) as cofactor. K(+) is required as a cofactor.

Its subcellular location is the cytoplasm. The enzyme catalyses L-methionine + ATP + H2O = S-adenosyl-L-methionine + phosphate + diphosphate. It functions in the pathway amino-acid biosynthesis; S-adenosyl-L-methionine biosynthesis; S-adenosyl-L-methionine from L-methionine: step 1/1. Catalyzes the formation of S-adenosylmethionine (AdoMet) from methionine and ATP. The overall synthetic reaction is composed of two sequential steps, AdoMet formation and the subsequent tripolyphosphate hydrolysis which occurs prior to release of AdoMet from the enzyme. This chain is S-adenosylmethionine synthase, found in Gloeobacter violaceus (strain ATCC 29082 / PCC 7421).